Consider the following 276-residue polypeptide: Pantothenate synthetase (276 aa).

27–34 (MGALHKGH) provides a ligand contact to ATP. The active-site Proton donor is the H34. Q58 contacts (R)-pantoate. A beta-alanine-binding site is contributed by Q58. 147–150 (GKKD) serves as a coordination point for ATP. Residue Q153 coordinates (R)-pantoate. ATP-binding positions include V176 and 184–187 (LSSR).

This sequence belongs to the pantothenate synthetase family. Homodimer.

It is found in the cytoplasm. The enzyme catalyses (R)-pantoate + beta-alanine + ATP = (R)-pantothenate + AMP + diphosphate + H(+). It participates in cofactor biosynthesis; (R)-pantothenate biosynthesis; (R)-pantothenate from (R)-pantoate and beta-alanine: step 1/1. In terms of biological role, catalyzes the condensation of pantoate with beta-alanine in an ATP-dependent reaction via a pantoyl-adenylate intermediate. This is Pantothenate synthetase from Helicobacter acinonychis (strain Sheeba).